A 456-amino-acid chain; its full sequence is Phospholipase A1 member A (456 aa).

An N-terminal signal peptide occupies residues 1–25 (MPPGPWESCFWVGGLILWLSVGSSG). Residue Asn-79 is glycosylated (N-linked (GlcNAc...) asparagine). Ser-166 functions as the Nucleophile in the catalytic mechanism. Asp-190 acts as the Charge relay system in catalysis. Cys-245 and Cys-258 are joined by a disulfide. The Charge relay system role is filled by His-260. 2 cysteine pairs are disulfide-bonded: Cys-282–Cys-293 and Cys-296–Cys-304. Asn-365 carries an N-linked (GlcNAc...) asparagine glycan. The tract at residues 374–456 (IPKQQRYGKG…VSCDLKIACV (83 aa)) is involved in the recognition of diacyl-phospholipids.

This sequence belongs to the AB hydrolase superfamily. Lipase family. Widely expressed. Expressed in placenta, prostate and liver. Weakly or not expressed in skin, leukocytes, platelets, colon, spleen, lung, muscle and kidney.

The protein localises to the secreted. It carries out the reaction a 1,2-diacyl-sn-glycero-3-phospho-L-serine + H2O = a 2-acyl-sn-glycero-3-phospho-L-serine + a fatty acid + H(+). The catalysed reaction is 1,2-di-(9Z)-octadecenoyl-sn-glycero-3-phospho-L-serine + H2O = 2-(9Z-octadecenoyl)-sn-glycero-3-phospho-L-serine + (9Z)-octadecenoate + H(+). It catalyses the reaction 1-hexadecanoyl-2-(5Z,8Z,11Z,14Z-eicosatetraenoyl)-sn-glycero-3-phospho-L-serine + H2O = 2-(5Z,8Z,11Z,14Z)-eicosatetraenoyl-sn-glycero-3-phospho-L-serine + hexadecanoate + H(+). The enzyme catalyses a 1-acyl-sn-glycero-3-phospho-L-serine + H2O = sn-glycero-3-phospho-L-serine + a fatty acid + H(+). It carries out the reaction 1-(9Z-octadecenoyl)-sn-glycero-3-phospho-L-serine + H2O = sn-glycero-3-phospho-L-serine + (9Z)-octadecenoate + H(+). In terms of biological role, hydrolyzes the ester bond of the acyl group attached at the sn-1 position of phosphatidylserines (phospholipase A1 activity) and 1-acyl-2-lysophosphatidylserines (lysophospholipase activity) in the pathway of phosphatidylserines acyl chain remodeling. Cleaves phosphatidylserines exposed on the outer leaflet of the plasma membrane of apoptotic cells producing 2-acyl-1-lysophosphatidylserines, which in turn enhance mast cell activation and histamine production. Has no activity toward other glycerophospholipids including phosphatidylcholines, phosphatidylethanolamines, phosphatidic acids or phosphatidylinositols, or glycerolipids such as triolein. Its function is as follows. Hydrolyzes lyso-PS but not PS. This chain is Phospholipase A1 member A, found in Homo sapiens (Human).